Reading from the N-terminus, the 266-residue chain is MLRLLVFTSLVLYGHSTQDFPETNARVVGGTAVSKNSWPSQISLQYKSGSSWYHTCGGTLIKQKWVMTAAHCVDSQMTFRVVLGDHNLSQNDGTEQYISVQKIVVHPSWNSNNVAAGYDIAVLRLAQSATLNSYVQLGVLPQSGTILANNTPCYITGWGRTKTNGQLAQTLQQAYLPSVDYATCSSSSYWGSTVKTTMVCAGGDGVRAGCQGDSGGPLHCLVNGQYAVHGVTSFVSSLGCNVSKKPTVFTRVSAYISWINNAIASN.

The signal sequence occupies residues 1 to 16; that stretch reads MLRLLVFTSLVLYGHS. A propeptide spans 17–26 (activation peptide); it reads TQDFPETNAR. Positions 27-264 constitute a Peptidase S1 domain; sequence VVGGTAVSKN…YISWINNAIA (238 aa). Cys56 and Cys72 are joined by a disulfide. His71 acts as the Charge relay system in catalysis. Positions 85, 87, 90, and 95 each coordinate Ca(2+). Asn87 is a glycosylation site (N-linked (GlcNAc...) asparagine). Asp119 (charge relay system) is an active-site residue. 3 disulfide bridges follow: Cys153–Cys220, Cys184–Cys200, and Cys210–Cys240. Ser214 serves as the catalytic Charge relay system. Residue Asn241 is glycosylated (N-linked (GlcNAc...) asparagine).

This sequence belongs to the peptidase S1 family. Elastase subfamily. Ca(2+) serves as cofactor. Pancreas.

It localises to the secreted. The catalysed reaction is Hydrolysis of proteins, including elastin. Preferential cleavage: Ala-|-Xaa.. Serine proteases that hydrolyze many proteins in addition to elastin. This Bos taurus (Bovine) protein is Chymotrypsin-like elastase family member 1 (CELA1).